The primary structure comprises 237 residues: Ribosomal RNA small subunit methyltransferase G (237 aa).

Residues glycine 78, phenylalanine 83, 129–130 (AE), and arginine 148 contribute to the S-adenosyl-L-methionine site. The tract at residues 218 to 237 (KKETPRKYPRKAGTPNKKPL) is disordered.

The protein belongs to the methyltransferase superfamily. RNA methyltransferase RsmG family.

It localises to the cytoplasm. Specifically methylates the N7 position of a guanine in 16S rRNA. The protein is Ribosomal RNA small subunit methyltransferase G of Streptococcus uberis (strain ATCC BAA-854 / 0140J).